A 353-amino-acid chain; its full sequence is Elongation factor Ts (353 aa).

The involved in Mg(2+) ion dislocation from EF-Tu stretch occupies residues 80–83 (TDFV).

The protein belongs to the EF-Ts family.

The protein resides in the cytoplasm. Associates with the EF-Tu.GDP complex and induces the exchange of GDP to GTP. It remains bound to the aminoacyl-tRNA.EF-Tu.GTP complex up to the GTP hydrolysis stage on the ribosome. In Sulfurovum sp. (strain NBC37-1), this protein is Elongation factor Ts.